The sequence spans 513 residues: Zinc finger CCCH-type with G patch domain-containing protein (513 aa).

Met-1 is subject to N-acetylmethionine. Positions 90–131 are disordered; the sequence is EVPVAPGAELETVPSRETGPGPTERGQEEDDGEDEEGGAALS. A compositionally biased stretch (acidic residues) spans 116 to 126; sequence QEEDDGEDEEG. A C3H1-type zinc finger spans residues 176–202; that stretch reads KSLKPCSFFLEGKCRFQENCRFSHGQV. A disordered region spans residues 267 to 296; sequence LPPLRTEPAGSSDSDGSDADDPSYARVVEP. Phosphoserine occurs at positions 278 and 355. Residues 315 to 361 enclose the G-patch domain; sequence TRGIGSRLLAKMGYEFGKGLGRHAEGRVEPVHAVVLPRGKSLDQCAE. Disordered stretches follow at residues 367 to 394 and 492 to 513; these read TRAG…PPPR and AQEA…MTEF. Over residues 497 to 513 the composition is skewed to basic and acidic residues; it reads LQREQRKADTHKKMTEF.

In terms of assembly, interacts with CHD4/Mi-2; the interaction is direct.

Its subcellular location is the nucleus. Transcription repressor that specifically binds the 5'-GGAG[GA]A[GA]A-3' consensus sequence. Represses transcription by recruiting the chromatin multiprotein complex NuRD to target promoters. Negatively regulates expression of EGFR, a gene involved in cell proliferation, survival and migration. Its ability to repress genes of the EGFR pathway suggest it may act as a tumor suppressor. This chain is Zinc finger CCCH-type with G patch domain-containing protein (ZGPAT), found in Bos taurus (Bovine).